Reading from the N-terminus, the 211-residue chain is Urease accessory protein UreG (211 aa).

12–19 (GPVGAGKT) is a binding site for GTP.

The protein belongs to the SIMIBI class G3E GTPase family. UreG subfamily. Homodimer. UreD, UreF and UreG form a complex that acts as a GTP-hydrolysis-dependent molecular chaperone, activating the urease apoprotein by helping to assemble the nickel containing metallocenter of UreC. The UreE protein probably delivers the nickel.

It localises to the cytoplasm. Facilitates the functional incorporation of the urease nickel metallocenter. This process requires GTP hydrolysis, probably effectuated by UreG. This is Urease accessory protein UreG from Paracoccus denitrificans (strain Pd 1222).